A 738-amino-acid chain; its full sequence is DNA repair and recombination protein RAD54-like (738 aa).

Residues 1 to 31 (MRRSLAPSQVAKRKQGPDSDDEEDWEPDMEP) are disordered. Over residues 18 to 29 (DSDDEEDWEPDM) the composition is skewed to acidic residues. A Helicase ATP-binding domain is found at 164 to 339 (GRRIENSYGC…FSLVHFVNSG (176 aa)). 177–184 (DEMGLGKT) contributes to the ATP binding site. The short motif at 290–293 (DEGH) is the DEAH box element. The Helicase C-terminal domain maps to 493–647 (LVLDYILAMT…CVVDEEQDVE (155 aa)). Phosphoserine occurs at positions 566 and 567.

Homohexamer. Interacts with RAD51. Phosphorylated. Phosphorylations at Ser-566 and Ser-567 allow efficient removal of RAD51 filaments from DNA.

The catalysed reaction is ATP + H2O = ADP + phosphate + H(+). Its function is as follows. Plays an essential role in homologous recombination (HR) which is a major pathway for repairing DNA double-strand breaks (DSBs), single-stranded DNA (ssDNA) gaps, and stalled or collapsed replication forks. Acts as a molecular motor during the homology search and guides RAD51 ssDNA along a donor dsDNA thereby changing the homology search from the diffusion-based mechanism to a motor-guided mechanism. Also plays an essential role in RAD51-mediated synaptic complex formation which consists of three strands encased in a protein filament formed once homology is recognized. Once DNA strand exchange occured, dissociates RAD51 from nucleoprotein filaments formed on dsDNA. The polypeptide is DNA repair and recombination protein RAD54-like (rad54l) (Danio rerio (Zebrafish)).